The primary structure comprises 379 residues: Lipid-A-disaccharide synthase (379 aa).

This sequence belongs to the LpxB family.

It carries out the reaction a lipid X + a UDP-2-N,3-O-bis[(3R)-3-hydroxyacyl]-alpha-D-glucosamine = a lipid A disaccharide + UDP + H(+). Its pathway is bacterial outer membrane biogenesis; LPS lipid A biosynthesis. Condensation of UDP-2,3-diacylglucosamine and 2,3-diacylglucosamine-1-phosphate to form lipid A disaccharide, a precursor of lipid A, a phosphorylated glycolipid that anchors the lipopolysaccharide to the outer membrane of the cell. The sequence is that of Lipid-A-disaccharide synthase from Pseudomonas fluorescens (strain SBW25).